A 363-amino-acid polypeptide reads, in one-letter code: 3-dehydroquinate synthase (363 aa).

NAD(+)-binding positions include 109-113, 133-134, Lys146, and Lys155; these read GASTD and TT. Positions 188, 251, and 267 each coordinate Zn(2+).

Belongs to the sugar phosphate cyclases superfamily. Dehydroquinate synthase family. Requires NAD(+) as cofactor. The cofactor is Co(2+). Zn(2+) serves as cofactor.

It localises to the cytoplasm. The enzyme catalyses 7-phospho-2-dehydro-3-deoxy-D-arabino-heptonate = 3-dehydroquinate + phosphate. Its pathway is metabolic intermediate biosynthesis; chorismate biosynthesis; chorismate from D-erythrose 4-phosphate and phosphoenolpyruvate: step 2/7. In terms of biological role, catalyzes the conversion of 3-deoxy-D-arabino-heptulosonate 7-phosphate (DAHP) to dehydroquinate (DHQ). This Streptomyces coelicolor (strain ATCC BAA-471 / A3(2) / M145) protein is 3-dehydroquinate synthase.